A 311-amino-acid chain; its full sequence is Methionyl-tRNA formyltransferase (311 aa).

109–112 provides a ligand contact to (6S)-5,6,7,8-tetrahydrofolate; the sequence is SLLP.

Belongs to the Fmt family.

It catalyses the reaction L-methionyl-tRNA(fMet) + (6R)-10-formyltetrahydrofolate = N-formyl-L-methionyl-tRNA(fMet) + (6S)-5,6,7,8-tetrahydrofolate + H(+). Its function is as follows. Attaches a formyl group to the free amino group of methionyl-tRNA(fMet). The formyl group appears to play a dual role in the initiator identity of N-formylmethionyl-tRNA by promoting its recognition by IF2 and preventing the misappropriation of this tRNA by the elongation apparatus. This Staphylococcus aureus (strain USA300) protein is Methionyl-tRNA formyltransferase.